Here is a 397-residue protein sequence, read N- to C-terminus: Protein ROH1D (397 aa).

A helical transmembrane segment spans residues 247-267; the sequence is LIVPVYTMTTVLLFVMWALVA.

It belongs to the ROH1 family. As to quaternary structure, interacts with EXO70C2. Mostly expressed in mature pollen.

It localises to the membrane. The protein resides in the cytoplasm. Its subcellular location is the cytosol. Functionally, involved in the regulation of plant growth, and modulates pollen development to ensure male fertility. May also affect the composition of the inner seed coat mucilage layer. The polypeptide is Protein ROH1D (Arabidopsis thaliana (Mouse-ear cress)).